The chain runs to 505 residues: Probable folylpolyglutamate synthase (505 aa).

89 to 92 (GKGS) lines the ATP pocket. Mg(2+)-binding residues include serine 121, glutamate 190, and histidine 218. ATP-binding residues include arginine 332 and aspartate 346.

Belongs to the folylpolyglutamate synthase family. A monovalent cation is required as a cofactor.

It localises to the mitochondrion inner membrane. It is found in the mitochondrion matrix. The protein resides in the cytoplasm. The enzyme catalyses (6S)-5,6,7,8-tetrahydrofolyl-(gamma-L-Glu)(n) + L-glutamate + ATP = (6S)-5,6,7,8-tetrahydrofolyl-(gamma-L-Glu)(n+1) + ADP + phosphate + H(+). It functions in the pathway cofactor biosynthesis; tetrahydrofolylpolyglutamate biosynthesis. In terms of biological role, catalyzes conversion of folates to polyglutamate derivatives allowing concentration of folate compounds in the cell and the intracellular retention of these cofactors, which are important substrates for most of the folate-dependent enzymes that are involved in one-carbon transfer reactions involved in purine, pyrimidine and amino acid synthesis. The sequence is that of Probable folylpolyglutamate synthase (met7) from Schizosaccharomyces pombe (strain 972 / ATCC 24843) (Fission yeast).